The primary structure comprises 107 residues: Ig kappa chain V-VI region XRPC 44 (107 aa).

A framework-1 region spans residues 1–23; sequence EIVLTQSPAITAASLGQKVTITC. Cys-23 and Cys-87 are oxidised to a cystine. Positions 24-33 are complementarity-determining-1; that stretch reads SASSSVSYMH. Residues 34 to 48 are framework-2; it reads WYQQKSGTSPKPWIY. The interval 49 to 55 is complementarity-determining-2; the sequence is EISKLAS. Residues 56-87 form a framework-3 region; that stretch reads GVPARFSGSGSGTSYSLTISSMEAEDAAIYYC. The tract at residues 88–96 is complementarity-determining-3; it reads QQWNYPLWT. A framework-4 region spans residues 97–106; that stretch reads FGGGTKLEIK.

The protein is Ig kappa chain V-VI region XRPC 44 of Mus musculus (Mouse).